Here is a 64-residue protein sequence, read N- to C-terminus: Probable cytochrome c oxidase subunit 5C-1 (64 aa).

Residues Ser-15–Trp-34 traverse the membrane as a helical segment.

The protein belongs to the cytochrome c oxidase subunit 5C family.

It is found in the mitochondrion inner membrane. Its function is as follows. This protein is one of the nuclear-coded polypeptide chains of cytochrome c oxidase, the terminal oxidase in mitochondrial electron transport. This chain is Probable cytochrome c oxidase subunit 5C-1, found in Arabidopsis thaliana (Mouse-ear cress).